Reading from the N-terminus, the 712-residue chain is Phosphomethylpyrimidine synthase (712 aa).

The disordered stretch occupies residues 14–49; the sequence is AIDITAPESTIPNKSKVPNKSAESSQSTVPKAPSRR. Residues 20-42 show a composition bias toward polar residues; sequence PESTIPNKSKVPNKSAESSQSTV. Substrate-binding positions include Asn-283, Met-312, Tyr-341, His-377, 397 to 399, 438 to 441, and Glu-477; these read SRG and DGMR. His-481 is a binding site for Zn(2+). Residue Tyr-504 coordinates substrate. His-545 lines the Zn(2+) pocket. [4Fe-4S] cluster contacts are provided by Cys-625, Cys-628, and Cys-633.

The protein belongs to the ThiC family. Homodimer. The cofactor is [4Fe-4S] cluster.

The enzyme catalyses 5-amino-1-(5-phospho-beta-D-ribosyl)imidazole + S-adenosyl-L-methionine = 4-amino-2-methyl-5-(phosphooxymethyl)pyrimidine + CO + 5'-deoxyadenosine + formate + L-methionine + 3 H(+). Its pathway is cofactor biosynthesis; thiamine diphosphate biosynthesis. Functionally, catalyzes the synthesis of the hydroxymethylpyrimidine phosphate (HMP-P) moiety of thiamine from aminoimidazole ribotide (AIR) in a radical S-adenosyl-L-methionine (SAM)-dependent reaction. The sequence is that of Phosphomethylpyrimidine synthase from Shewanella putrefaciens (strain CN-32 / ATCC BAA-453).